Here is a 436-residue protein sequence, read N- to C-terminus: F-box/LRR-repeat protein 20 (436 aa).

The F-box domain occupies 22–68 (AVINKKLPKELLLRIFSFLDVVTLCRCAQVSRAWNVLALDGSNWQRI). LRR repeat units lie at residues 74–100 (QRDIEGRVVENISKRCGGFLRKLSLRG), 101–126 (CLGVGDNALRTFAQNCRNIEVLSLNG), 127–152 (CTKTTDATCTSLSKFCSKLRHLDLAS), 153–178 (CTSITNMSLKALSEGCPLLEQLNISW), 179–204 (CDQVTKDGIQALVRGCGGLKALFLKG), 205–230 (CTQLEDEALKYIGAHCPELVTLNLQT), 231–256 (CLQITDEGLITICRGCHKLQSLCASG), 257–282 (CSNITDAILNALGQNCPRLRILEVAR), 283–308 (CSQLTDVGFTTLARNCHELEKMDLEE), 309–334 (CVQITDSTLIQLSIHCPRLQVLSLSH), 335–363 (CELITDDGIRHLGNGACAHDQLEVIELDN), 364–388 (CPLITDASLEHLKSCHSLERIELYD), and 389–414 (CQQITRAGIKRLRTHLPNIKVHAYFA). Thr417 is subject to Phosphothreonine. Ser421 bears the Phosphoserine mark.

Interacts with SKP1 and CUL1. Highly expressed in brain.

It is found in the cytoplasm. In terms of biological role, substrate-recognition component of the SCF (SKP1-CUL1-F-box protein)-type E3 ubiquitin ligase complex. Isoform 3 regulates neural transmission by binding and ubiquitinating RIMS1, a modulator of presynaptic plasticity. This Mus musculus (Mouse) protein is F-box/LRR-repeat protein 20 (Fbxl20).